Reading from the N-terminus, the 245-residue chain is MASTALLALCSTGAFSGLAVEAGAGVCHATPIYAGHSWHQATFRLNVAGSTLSRYLRDLLVAANPDLLQQALPRKAITHLKKRSCYVSLDFEGDLRDPARHHPASFSVGNGCCVCLSSERFRCPEPIFQPGLLGQAEQGLPALAFRALQKMPKTLRTRLADTVVLAGGSTLFPGFAERLDKELEAQCRRHGYAALRPHLVAKHGRGMAVWTGGSMVASLHSFQRRWITRAMYQECGSRLLYDVFN.

This sequence belongs to the actin family.

In Homo sapiens (Human), this protein is Actin-like protein 10 (ACTL10).